A 29-amino-acid polypeptide reads, in one-letter code: Dermaseptin-9TR (29 aa).

Expressed by the skin glands.

Its subcellular location is the secreted. Has antimicrobial activity. The polypeptide is Dermaseptin-9TR (Phyllomedusa trinitatis (Trinidad leaf frog)).